Reading from the N-terminus, the 477-residue chain is Aryl-phospho-beta-D-glucosidase BglC (477 aa).

E170 functions as the Proton donor in the catalytic mechanism. The active-site Nucleophile is the E378.

It belongs to the glycosyl hydrolase 1 family.

The enzyme catalyses 6-phospho-beta-D-glucosyl-(1-&gt;4)-D-glucose + H2O = D-glucose 6-phosphate + D-glucose. In terms of biological role, is able to catalyze the hydrolysis of aryl-phospho-beta-D-glucosides such as 4-methylumbelliferyl-phospho-beta-D-glucopyranoside (MUG-P), phosphoarbutin and phosphosalicin. Is not essential for growth on arbutin and salicin as the sole carbon source. The protein is Aryl-phospho-beta-D-glucosidase BglC (bglC) of Bacillus subtilis (strain 168).